The chain runs to 44 residues: Cytochrome b559 subunit beta (44 aa).

Residues 19 to 35 (WLSVHALGVPSVFFLGA) form a helical membrane-spanning segment. His23 is a heme binding site.

The protein belongs to the PsbE/PsbF family. As to quaternary structure, heterodimer of an alpha subunit and a beta subunit. PSII is composed of 1 copy each of membrane proteins PsbA, PsbB, PsbC, PsbD, PsbE, PsbF, PsbH, PsbI, PsbJ, PsbK, PsbL, PsbM, PsbT, PsbX, PsbY, PsbZ, Psb30/Ycf12, peripheral proteins PsbO, CyanoQ (PsbQ), PsbU, PsbV and a large number of cofactors. It forms dimeric complexes. It depends on heme b as a cofactor.

It localises to the cellular thylakoid membrane. Its function is as follows. This b-type cytochrome is tightly associated with the reaction center of photosystem II (PSII). PSII is a light-driven water:plastoquinone oxidoreductase that uses light energy to abstract electrons from H(2)O, generating O(2) and a proton gradient subsequently used for ATP formation. It consists of a core antenna complex that captures photons, and an electron transfer chain that converts photonic excitation into a charge separation. This Synechococcus elongatus (strain ATCC 33912 / PCC 7942 / FACHB-805) (Anacystis nidulans R2) protein is Cytochrome b559 subunit beta.